Consider the following 268-residue polypeptide: MTLLNISGLSHHYAHGGFNGKHQHQAVLNNVSLTLKSGETVALLGRSGCGKSTLARLLVGLESPAQGNISWRGEPLAKLNRAQRKAFRRDIQMVFQDSISAVNPRKTVREILREPMRHLLSLKKSEQLARASEMLKAVDLDDSVLDKRPPQLSGGQLQRVCLARALAVEPKLLILDEAVSNLDLVLQAGVIRLLKKLQQQFGTACLFITHDLRLVERFCQRVMVMDNGQIVETQVVGEKLTFSSDAGRVLQNAVLPAFPVRRRTTEKV.

One can recognise an ABC transporter domain in the interval 4-252 (LNISGLSHHY…SSDAGRVLQN (249 aa)). Position 45 to 52 (45 to 52 (GRSGCGKS)) interacts with ATP.

Belongs to the ABC transporter superfamily. Nickel importer (TC 3.A.1.5.3) family. The complex is composed of two ATP-binding proteins (NikD and NikE), two transmembrane proteins (NikB and NikC) and a solute-binding protein (NikA).

It is found in the cell inner membrane. It catalyses the reaction Ni(2+)(out) + ATP + H2O = Ni(2+)(in) + ADP + phosphate + H(+). Part of the ABC transporter complex NikABCDE involved in nickel import. Responsible for energy coupling to the transport system. The protein is Nickel import ATP-binding protein NikE of Escherichia coli (strain K12).